A 105-amino-acid polypeptide reads, in one-letter code: Translation initiation factor 1A 2 (105 aa).

The interval 1–22 is disordered; it reads MRKRREGSAAPSTQEVTRVRTP. Positions 17–91 constitute an S1-like domain; the sequence is TRVRTPRKEN…TKADVIWKYT (75 aa).

Belongs to the eIF-1A family.

Functionally, seems to be required for maximal rate of protein biosynthesis. Enhances ribosome dissociation into subunits and stabilizes the binding of the initiator Met-tRNA(I) to 40 S ribosomal subunits. The chain is Translation initiation factor 1A 2 (eIF1A2) from Methanosarcina acetivorans (strain ATCC 35395 / DSM 2834 / JCM 12185 / C2A).